A 483-amino-acid chain; its full sequence is Protein nucleotidyltransferase YdiU (483 aa).

8 residues coordinate ATP: glycine 87, glycine 89, arginine 90, lysine 110, aspartate 122, glycine 123, arginine 173, and arginine 180. Aspartate 249 (proton acceptor) is an active-site residue. Mg(2+) contacts are provided by asparagine 250 and aspartate 259. Aspartate 259 serves as a coordination point for ATP.

The protein belongs to the SELO family. Mg(2+) is required as a cofactor. The cofactor is Mn(2+).

The catalysed reaction is L-seryl-[protein] + ATP = 3-O-(5'-adenylyl)-L-seryl-[protein] + diphosphate. The enzyme catalyses L-threonyl-[protein] + ATP = 3-O-(5'-adenylyl)-L-threonyl-[protein] + diphosphate. It catalyses the reaction L-tyrosyl-[protein] + ATP = O-(5'-adenylyl)-L-tyrosyl-[protein] + diphosphate. It carries out the reaction L-histidyl-[protein] + UTP = N(tele)-(5'-uridylyl)-L-histidyl-[protein] + diphosphate. The catalysed reaction is L-seryl-[protein] + UTP = O-(5'-uridylyl)-L-seryl-[protein] + diphosphate. The enzyme catalyses L-tyrosyl-[protein] + UTP = O-(5'-uridylyl)-L-tyrosyl-[protein] + diphosphate. Its function is as follows. Nucleotidyltransferase involved in the post-translational modification of proteins. It can catalyze the addition of adenosine monophosphate (AMP) or uridine monophosphate (UMP) to a protein, resulting in modifications known as AMPylation and UMPylation. This chain is Protein nucleotidyltransferase YdiU, found in Pectobacterium carotovorum subsp. carotovorum (strain PC1).